Consider the following 266-residue polypeptide: ATP synthase subunit a (266 aa).

6 helical membrane passes run lysine 38–alanine 58, leucine 99–isoleucine 119, histidine 126–valine 146, glycine 162–valine 182, leucine 191–tyrosine 211, and serine 224–leucine 244.

The protein belongs to the ATPase A chain family. F-type ATPases have 2 components, CF(1) - the catalytic core - and CF(0) - the membrane proton channel. CF(1) has five subunits: alpha(3), beta(3), gamma(1), delta(1), epsilon(1). CF(0) has three main subunits: a(1), b(2) and c(9-12). The alpha and beta chains form an alternating ring which encloses part of the gamma chain. CF(1) is attached to CF(0) by a central stalk formed by the gamma and epsilon chains, while a peripheral stalk is formed by the delta and b chains.

The protein localises to the cell membrane. Its function is as follows. Key component of the proton channel; it plays a direct role in the translocation of protons across the membrane. This chain is ATP synthase subunit a, found in Arthrobacter sp. (strain FB24).